We begin with the raw amino-acid sequence, 87 residues long: DNA-directed RNA polymerase subunit omega (87 aa).

The protein belongs to the RNA polymerase subunit omega family. In terms of assembly, the RNAP catalytic core consists of 2 alpha, 1 beta, 1 beta' and 1 omega subunit. When a sigma factor is associated with the core the holoenzyme is formed, which can initiate transcription.

The catalysed reaction is RNA(n) + a ribonucleoside 5'-triphosphate = RNA(n+1) + diphosphate. Its function is as follows. Promotes RNA polymerase assembly. Latches the N- and C-terminal regions of the beta' subunit thereby facilitating its interaction with the beta and alpha subunits. The protein is DNA-directed RNA polymerase subunit omega of Pseudomonas fluorescens (strain ATCC BAA-477 / NRRL B-23932 / Pf-5).